A 325-amino-acid polypeptide reads, in one-letter code: tRNA N6-adenosine threonylcarbamoyltransferase (325 aa).

Fe cation is bound by residues histidine 107, histidine 111, and tyrosine 127. Substrate is bound by residues 127-131, aspartate 159, glycine 172, glutamate 176, and asparagine 257; that span reads YVSGG. Aspartate 285 lines the Fe cation pocket.

It belongs to the KAE1 / TsaD family. Monomer. Component of the KEOPS complex that consists of Kae1, Bud32, Cgi121 and Pcc1; the whole complex dimerizes. The cofactor is Fe(2+).

The protein resides in the cytoplasm. It carries out the reaction L-threonylcarbamoyladenylate + adenosine(37) in tRNA = N(6)-L-threonylcarbamoyladenosine(37) in tRNA + AMP + H(+). Its function is as follows. Required for the formation of a threonylcarbamoyl group on adenosine at position 37 (t(6)A37) in tRNAs that read codons beginning with adenine. Is a component of the KEOPS complex that is probably involved in the transfer of the threonylcarbamoyl moiety of threonylcarbamoyl-AMP (TC-AMP) to the N6 group of A37. Kae1 likely plays a direct catalytic role in this reaction, but requires other protein(s) of the complex to fulfill this activity. This is tRNA N6-adenosine threonylcarbamoyltransferase from Thermococcus kodakarensis (strain ATCC BAA-918 / JCM 12380 / KOD1) (Pyrococcus kodakaraensis (strain KOD1)).